The chain runs to 293 residues: Shikimate dehydrogenase (NADP(+)) (293 aa).

Residues 20 to 22 (SLT) and T72 contribute to the shikimate site. The active-site Proton acceptor is K76. N97 and D112 together coordinate shikimate. Residues 136 to 140 (GAGGA) and I230 contribute to the NADP(+) site. Position 232 (Y232) interacts with shikimate. Position 253 (G253) interacts with NADP(+).

The protein belongs to the shikimate dehydrogenase family. In terms of assembly, homodimer.

The catalysed reaction is shikimate + NADP(+) = 3-dehydroshikimate + NADPH + H(+). It functions in the pathway metabolic intermediate biosynthesis; chorismate biosynthesis; chorismate from D-erythrose 4-phosphate and phosphoenolpyruvate: step 4/7. Involved in the biosynthesis of the chorismate, which leads to the biosynthesis of aromatic amino acids. Catalyzes the reversible NADPH linked reduction of 3-dehydroshikimate (DHSA) to yield shikimate (SA). The protein is Shikimate dehydrogenase (NADP(+)) of Arthrobacter sp. (strain FB24).